A 292-amino-acid chain; its full sequence is UDP-N-acetylenolpyruvoylglucosamine reductase (292 aa).

One can recognise an FAD-binding PCMH-type domain in the interval 21-186 (QAGGLVDYLA…ISATFELQPD (166 aa)). The active site involves R165. S215 functions as the Proton donor in the catalytic mechanism. The active site involves E285.

It belongs to the MurB family. Requires FAD as cofactor.

Its subcellular location is the cytoplasm. The enzyme catalyses UDP-N-acetyl-alpha-D-muramate + NADP(+) = UDP-N-acetyl-3-O-(1-carboxyvinyl)-alpha-D-glucosamine + NADPH + H(+). Its pathway is cell wall biogenesis; peptidoglycan biosynthesis. Functionally, cell wall formation. This Leuconostoc mesenteroides subsp. mesenteroides (strain ATCC 8293 / DSM 20343 / BCRC 11652 / CCM 1803 / JCM 6124 / NCDO 523 / NBRC 100496 / NCIMB 8023 / NCTC 12954 / NRRL B-1118 / 37Y) protein is UDP-N-acetylenolpyruvoylglucosamine reductase.